A 393-amino-acid chain; its full sequence is 4-hydroxyphenylpyruvate dioxygenase (393 aa).

An N-acetylthreonine modification is found at threonine 2. 2 VOC domains span residues 18–152 and 180–338; these read HFHS…KMTF and IIDH…IFTK. Fe cation is bound at residue histidine 183. A phosphoserine mark is found at serine 211, serine 226, and serine 250. Positions 266 and 349 each coordinate Fe cation.

It belongs to the 4HPPD family. Homodimer. Requires Fe cation as cofactor. Liver.

It localises to the cytoplasm. The protein resides in the endoplasmic reticulum membrane. It is found in the golgi apparatus membrane. The catalysed reaction is 3-(4-hydroxyphenyl)pyruvate + O2 = homogentisate + CO2. It functions in the pathway amino-acid degradation; L-phenylalanine degradation; acetoacetate and fumarate from L-phenylalanine: step 3/6. Catalyzes the conversion of 4-hydroxyphenylpyruvic acid to homogentisic acid, one of the steps in tyrosine catabolism. The protein is 4-hydroxyphenylpyruvate dioxygenase (HPD) of Sus scrofa (Pig).